We begin with the raw amino-acid sequence, 170 residues long: Inducible metalloproteinase inhibitor protein (170 aa).

Positions 1–19 are cleaved as a signal peptide; the sequence is MKCLLYLCLWCYCVLVSSS. 2 N-linked (GlcNAc...) asparagine glycosylation sites follow: N48 and N149.

Cleaved. Post-translationally, five disulfide bonds are present. When artificially cleaved by thermolysin between Asn-56 and Ile-57, the two obtained chains (called heavy and light chains) remain linked. In terms of processing, the N-terminus is blocked.

Functionally, inhibits thermolysin, bacillolysin and pseudolysin, B.polymyxa metalloprotease and human MMP1 and MMP3. No activity on trypsin or cysteine protease papain. The sequence is that of Inducible metalloproteinase inhibitor protein (IMPI) from Galleria mellonella (Greater wax moth).